Reading from the N-terminus, the 298-residue chain is Acetylglutamate kinase (298 aa).

Substrate contacts are provided by residues 68–69 (GG), arginine 90, and asparagine 195.

It belongs to the acetylglutamate kinase family. ArgB subfamily.

Its subcellular location is the cytoplasm. It catalyses the reaction N-acetyl-L-glutamate + ATP = N-acetyl-L-glutamyl 5-phosphate + ADP. It functions in the pathway amino-acid biosynthesis; L-arginine biosynthesis; N(2)-acetyl-L-ornithine from L-glutamate: step 2/4. Its function is as follows. Catalyzes the ATP-dependent phosphorylation of N-acetyl-L-glutamate. The chain is Acetylglutamate kinase from Hydrogenovibrio crunogenus (strain DSM 25203 / XCL-2) (Thiomicrospira crunogena).